A 351-amino-acid chain; its full sequence is Short-chain dehydrogenase sdnK (351 aa).

Residues Ile46, Thr66, Glu98, Tyr224, Lys228, and Thr268 each contribute to the NADP(+) site. The active-site Proton donor is the Tyr224. The active-site Lowers pKa of active site Tyr is Lys228.

This sequence belongs to the short-chain dehydrogenases/reductases (SDR) family.

It participates in antibiotic biosynthesis. Its function is as follows. Short-chain dehydrogenase; part of the gene cluster that mediates the biosynthesis of sordarin and hypoxysordarin, glycoside antibiotics with a unique tetracyclic diterpene aglycone structure. First, the geranylgeranyl diphosphate synthase sdnC constructs GGDP from farnesyl diphosphate and isopentenyl diphosphate. The diterpene cyclase sdnA then catalyzes the cyclization of GGDP to afford cycloaraneosene. Cycloaraneosene is then hydroxylated four times by the putative cytochrome P450 monooxygenases sdnB, sdnE, sdnF and sdnH to give a hydroxylated cycloaraneosene derivative such as cycloaraneosene-8,9,13,19-tetraol. Although the order of the hydroxylations is unclear, at least C8, C9 and C13 of the cycloaraneosene skeleton are hydroxylated before the sordaricin formation. Dehydration of the 13-hydroxy group of the hydroxylated cycloaraneosene derivative might be catalyzed by an unassigned hypothetical protein such as sdnG and sdnP to construct the cyclopentadiene moiety. The FAD-dependent oxidoreductase sdnN is proposed to catalyze the oxidation at C9 of the hydroxylated cycloaraneosene derivative and also catalyze the Baeyer-Villiger oxidation to give the lactone intermediate. The presumed lactone intermediate would be hydrolyzed to give an acrolein moiety and a carboxylate moiety. Then, [4+2]cycloaddition would occur between the acrolein moiety and the cyclopentadiene moiety to give sordaricin. SdnN might also be involved in the [4+2]cycloaddition after the hypothesized oxidation to accommodate the oxidized product and prompt the [4+2]cycloaddition. GDP-6-deoxy-D-altrose may be biosynthesized from GDP-D-mannose by the putative GDP-mannose-4,6-dehydratase sdnI and the short-chain dehydrogenase sdnK. The glycosyltransferase sdnJ catalyzes the attachment of 6-deoxy-D-altrose onto the 19-hydroxy group of sordaricin to give 4'-O-demethylsordarin. The methyltransferase sdnD would complete the biosynthesis of sordarin. Sordarin can be further modified into hypoxysordarin. The unique acyl chain at the 3'-hydroxy group of hypoxysordarin would be constructed by an iterative type I PKS sdnO and the trans-acting polyketide methyltransferase sdnL. SdnL would be responsible for the introduction of an alpha-methyl group of the polyketide chain. Alternatively, the beta-lactamase-like protein sdnR might be responsible for the cleavage and transfer of the polyketide chain from the PKS sdnO to sordarin. Two putative cytochrome P450 monooxygenases, sdnQ and sdnT, might catalyze the epoxidations of the polyketide chain to complete the biosynthesis of hypoxysordarin. Transcriptional regulators sdnM and sdnS are presumably encoded for the transcriptional regulation of the expression of the sdn gene cluster. This is Short-chain dehydrogenase sdnK from Sordaria araneosa (Pleurage araneosa).